Reading from the N-terminus, the 358-residue chain is Probable translocation protein Y4yK (358 aa).

This sequence belongs to the FliN/MopA/SpaO family.

Functionally, could be involved in the secretion of an unknown factor. This Sinorhizobium fredii (strain NBRC 101917 / NGR234) protein is Probable translocation protein Y4yK.